Consider the following 101-residue polypeptide: MSNNPNNSGQPNKTQSILQEVDKVKDVMHNNIGLMLNNHDKASNLQDKTASMSNNARLFKKQTVTIRRQMWCRNMKLQLIIIAVVILVLAVILIPIIMKFV.

Topologically, residues 1–76 (MSNNPNNSGQ…RRQMWCRNMK (76 aa)) are cytoplasmic. One can recognise a v-SNARE coiled-coil homology domain in the interval 13–73 (KTQSILQEVD…VTIRRQMWCR (61 aa)). A helical; Anchor for type IV membrane protein transmembrane segment spans residues 77-97 (LQLIIIAVVILVLAVILIPII). The Vesicular portion of the chain corresponds to 98-101 (MKFV).

It belongs to the synaptobrevin family.

Its subcellular location is the cytoplasmic vesicle. The protein resides in the secretory vesicle membrane. Its function is as follows. Involved in the targeting and/or fusion of transport vesicles to their target membrane. The sequence is that of Synaptobrevin-B (sybB) from Dictyostelium discoideum (Social amoeba).